The following is a 186-amino-acid chain: ATP synthase subunit b' (186 aa).

A helical membrane pass occupies residues 39–59 (IFWLLLALGAIYWLLKNIAIP).

It belongs to the ATPase B chain family. F-type ATPases have 2 components, F(1) - the catalytic core - and F(0) - the membrane proton channel. F(1) has five subunits: alpha(3), beta(3), gamma(1), delta(1), epsilon(1). F(0) has four main subunits: a(1), b(1), b'(1) and c(10-14). The alpha and beta chains form an alternating ring which encloses part of the gamma chain. F(1) is attached to F(0) by a central stalk formed by the gamma and epsilon chains, while a peripheral stalk is formed by the delta, b and b' chains.

The protein localises to the cellular chromatophore membrane. Its function is as follows. F(1)F(0) ATP synthase produces ATP from ADP in the presence of a proton or sodium gradient. F-type ATPases consist of two structural domains, F(1) containing the extramembraneous catalytic core and F(0) containing the membrane proton channel, linked together by a central stalk and a peripheral stalk. During catalysis, ATP synthesis in the catalytic domain of F(1) is coupled via a rotary mechanism of the central stalk subunits to proton translocation. In terms of biological role, component of the F(0) channel, it forms part of the peripheral stalk, linking F(1) to F(0). The b'-subunit is a diverged and duplicated form of b found in plants and photosynthetic bacteria. The protein is ATP synthase subunit b' of Rhodobacter capsulatus (Rhodopseudomonas capsulata).